Consider the following 119-residue polypeptide: Holo-[acyl-carrier-protein] synthase (119 aa).

Residues Asp-8 and Glu-58 each contribute to the Mg(2+) site.

This sequence belongs to the P-Pant transferase superfamily. AcpS family. The cofactor is Mg(2+).

It localises to the cytoplasm. It catalyses the reaction apo-[ACP] + CoA = holo-[ACP] + adenosine 3',5'-bisphosphate + H(+). In terms of biological role, transfers the 4'-phosphopantetheine moiety from coenzyme A to a Ser of acyl-carrier-protein. The chain is Holo-[acyl-carrier-protein] synthase from Lactobacillus johnsonii (strain CNCM I-12250 / La1 / NCC 533).